Here is a 604-residue protein sequence, read N- to C-terminus: Linalool synthase Tps-5042L13, chloroplastic (604 aa).

A chloroplast-targeting transit peptide spans 1-34 (MSSMRIYVAIMKKPSVKHVDNVDKKASKPSWRVS). 5 residues coordinate (2E)-geranyl diphosphate: arginine 323, aspartate 360, aspartate 364, arginine 501, and aspartate 504. Positions 360 and 364 each coordinate Mg(2+). Positions 360 to 364 (DDVYD) match the DDXXD motif motif. Mg(2+) is bound by residues aspartate 504, threonine 508, and glutamate 512.

Belongs to the terpene synthase family. Tpsb subfamily. As to quaternary structure, monomer. The cofactor is Mg(2+). Mn(2+) is required as a cofactor.

It localises to the plastid. The protein resides in the chloroplast. It carries out the reaction (2E)-geranyl diphosphate + H2O = linalool + diphosphate. It participates in secondary metabolite biosynthesis; terpenoid biosynthesis. Functionally, monoterpene synthase (mono-TPS) involved in the biosynthesis of monoterpenes natural products. Catalyzes the conversion of (2E)-geranyl diphosphate (GPP) into linalool. The protein is Linalool synthase Tps-5042L13, chloroplastic of Perilla frutescens (Beefsteak mint).